The chain runs to 162 residues: Ribosome maturation factor RimP (162 aa).

It belongs to the RimP family.

It localises to the cytoplasm. Required for maturation of 30S ribosomal subunits. This Beutenbergia cavernae (strain ATCC BAA-8 / DSM 12333 / CCUG 43141 / JCM 11478 / NBRC 16432 / NCIMB 13614 / HKI 0122) protein is Ribosome maturation factor RimP.